The sequence spans 295 residues: Golgi-associated RAB2 interactor protein 1A (295 aa).

The disordered stretch occupies residues 187–206 (MPNSSTETTPESSRPASSQS). Residues 190–206 (SSTETTPESSRPASSQS) are compositionally biased toward low complexity. Phosphoserine is present on residues Ser220, Ser221, Ser251, and Ser255.

The protein belongs to the GARIN family. In terms of assembly, interacts (via N-terminus) with RAB2B (in GTP-bound form).

Its subcellular location is the golgi apparatus. RAB2B effector protein required for accurate acrosome formation and normal male fertility. The sequence is that of Golgi-associated RAB2 interactor protein 1A (Garin1a) from Rattus norvegicus (Rat).